Here is a 678-residue protein sequence, read N- to C-terminus: uncharacterized protein (678 aa).

The next 8 helical transmembrane spans lie at 228–250 (FFVILILGAVITLLLSLAIFSFL), 263–285 (LAMWWLPAILGVLSVCSVFVATQ), 300–322 (STGALPLLALIVKHSIAIALSCV), 334–356 (MLHNGFIGGYLASTLCLLYAVLF), 361–380 (FSLSAVFALEYALSLVFFSA), 387–405 (RIMLAMMFLLFAPFLYAYL), 420–439 (NVFFALGCVPFMLFMLTLFF), and 455–477 (NLLLSGALLTVLVINGVLWSVSL). A disordered region spans residues 653-678 (PSSQGVHATPEKNACIRDETVPNLQE).

The protein localises to the cell membrane. This is an uncharacterized protein from Treponema pallidum (strain Nichols).